Here is a 477-residue protein sequence, read N- to C-terminus: Oxidative stress-induced growth inhibitor 1 (477 aa).

At Ser-12 the chain carries Phosphoserine.

This sequence belongs to the OKL38 family. NADPH serves as cofactor. Ubiquitous. Highest expression in the ovary, testis, kidney, skeletal muscle and liver.

Its subcellular location is the midbody. Its function is as follows. Monooxygenase catalytic activity. Involved in regulation of cytokinesis; promotes RHOA activity, probably acting locally at the midbody in late cytokinesis. Monooxygenase activity is involved in stabilizing transient structures between daughter cells, termed intercellular bridges, before abscission. Regulates differentiation and proliferation through the regulation of cell death. The chain is Oxidative stress-induced growth inhibitor 1 from Homo sapiens (Human).